A 467-amino-acid polypeptide reads, in one-letter code: ATP synthase subunit beta, sodium ion specific (467 aa).

151-158 (GGAGVGKT) serves as a coordination point for ATP.

This sequence belongs to the ATPase alpha/beta chains family. F-type ATPases have 2 components, CF(1) - the catalytic core - and CF(0) - the membrane proton channel. CF(1) has five subunits: alpha(3), beta(3), gamma(1), delta(1), epsilon(1). CF(0) has three main subunits: a, b and c.

The protein localises to the cell membrane. It carries out the reaction 4 Na(+)(in) + ATP + H2O = 4 Na(+)(out) + ADP + phosphate + H(+). In terms of biological role, produces ATP from ADP in the presence of a sodium ion gradient across the membrane. The beta chain is the catalytic subunit. The polypeptide is ATP synthase subunit beta, sodium ion specific (Propionigenium modestum).